Consider the following 763-residue polypeptide: Actin filament-associated protein 1-like 1 (763 aa).

The segment at 83–137 (LQDMPEDEAESCKAASPEPAKSPSLRHTADLPPPLPNRPPPEDYYEEALPLGPGK) is disordered. Residues Ser-98, Ser-104, and Ser-153 each carry the phosphoserine modification. The segment at 169 to 210 (TRMNGELKNSYNDSDAMSSSYESYDEEEEEGKGPQPTHQWPS) is disordered. The segment covering 175 to 185 (LKNSYNDSDAM) has biased composition (polar residues). The PH 1 domain occupies 220-316 (DCRICAFLLR…WLKVIREVSK (97 aa)). Phosphoserine is present on residues Ser-329 and Ser-343. Residues 343–380 (SQEKQTSDSDSLGMGDSCSTLGREHGKGKKSSLSELKG) form a disordered region. Residues 413-507 (EVPCCGYLNV…WLGLLLVEMG (95 aa)) enclose the PH 2 domain. Position 552 is a phosphotyrosine (Tyr-552). The interval 561–604 (QDEEPERPPGAQVKRHASTCSEKSHRVDPQVKVKRHASSAHQYK) is disordered. Over residues 582–591 (EKSHRVDPQV) the composition is skewed to basic and acidic residues. The stretch at 606–694 (GKNRAEEDAR…LVTVKERLQQ (89 aa)) forms a coiled coil. Residues 712–724 (SGETANKPQNNVP) show a composition bias toward polar residues. The disordered stretch occupies residues 712-763 (SGETANKPQNNVPEQPLPVNCVSELRKRSPSIINSNQGRVLQKAKEWEMKKT). Ser-742 carries the phosphoserine modification. The segment covering 754–763 (KAKEWEMKKT) has biased composition (basic and acidic residues).

In terms of assembly, interacts with CTTN.

Its subcellular location is the cytoplasm. The protein localises to the cell projection. It is found in the podosome. The protein resides in the invadopodium. It localises to the cytoskeleton. Its subcellular location is the stress fiber. Its function is as follows. May be involved in podosome and invadosome formation. This chain is Actin filament-associated protein 1-like 1 (AFAP1L1), found in Bos taurus (Bovine).